A 338-amino-acid polypeptide reads, in one-letter code: Ketol-acid reductoisomerase (NADP(+)) (338 aa).

The 181-residue stretch at M1 to T181 folds into the KARI N-terminal Rossmann domain. NADP(+) contacts are provided by residues Y24–Q27, R47, and S52. H107 is a catalytic residue. Residue G133 participates in NADP(+) binding. Positions N182–I327 constitute a KARI C-terminal knotted domain. The Mg(2+) site is built by D190, E194, E226, and E230. S251 is a binding site for substrate.

This sequence belongs to the ketol-acid reductoisomerase family. The cofactor is Mg(2+).

It catalyses the reaction (2R)-2,3-dihydroxy-3-methylbutanoate + NADP(+) = (2S)-2-acetolactate + NADPH + H(+). The catalysed reaction is (2R,3R)-2,3-dihydroxy-3-methylpentanoate + NADP(+) = (S)-2-ethyl-2-hydroxy-3-oxobutanoate + NADPH + H(+). It participates in amino-acid biosynthesis; L-isoleucine biosynthesis; L-isoleucine from 2-oxobutanoate: step 2/4. The protein operates within amino-acid biosynthesis; L-valine biosynthesis; L-valine from pyruvate: step 2/4. Functionally, involved in the biosynthesis of branched-chain amino acids (BCAA). Catalyzes an alkyl-migration followed by a ketol-acid reduction of (S)-2-acetolactate (S2AL) to yield (R)-2,3-dihydroxy-isovalerate. In the isomerase reaction, S2AL is rearranged via a Mg-dependent methyl migration to produce 3-hydroxy-3-methyl-2-ketobutyrate (HMKB). In the reductase reaction, this 2-ketoacid undergoes a metal-dependent reduction by NADPH to yield (R)-2,3-dihydroxy-isovalerate. This chain is Ketol-acid reductoisomerase (NADP(+)), found in Variovorax paradoxus (strain S110).